The sequence spans 469 residues: 3-isopropylmalate dehydratase large subunit (469 aa).

Positions 347, 407, and 410 each coordinate [4Fe-4S] cluster.

This sequence belongs to the aconitase/IPM isomerase family. LeuC type 1 subfamily. Heterodimer of LeuC and LeuD. The cofactor is [4Fe-4S] cluster.

It catalyses the reaction (2R,3S)-3-isopropylmalate = (2S)-2-isopropylmalate. The protein operates within amino-acid biosynthesis; L-leucine biosynthesis; L-leucine from 3-methyl-2-oxobutanoate: step 2/4. Catalyzes the isomerization between 2-isopropylmalate and 3-isopropylmalate, via the formation of 2-isopropylmaleate. In Prochlorococcus marinus (strain NATL2A), this protein is 3-isopropylmalate dehydratase large subunit.